The chain runs to 104 residues: Large ribosomal subunit protein bL21 (104 aa).

The protein belongs to the bacterial ribosomal protein bL21 family. As to quaternary structure, part of the 50S ribosomal subunit. Contacts protein L20.

This protein binds to 23S rRNA in the presence of protein L20. The protein is Large ribosomal subunit protein bL21 of Streptococcus pyogenes serotype M1.